Consider the following 364-residue polypeptide: Protein IncC (364 aa).

Composition is skewed to basic and acidic residues over residues Met-1–Tyr-10, Ala-26–Gly-42, and His-89–Lys-100. 2 disordered regions span residues Met-1–Val-63 and Val-75–Gly-102.

This sequence belongs to the ParA family.

This is one of the proteins encoded by the trfB operon; it is involved in plasmid maintenance and replication. The sequence is that of Protein IncC (incC) from Escherichia coli.